The following is a 226-amino-acid chain: Movement and silencing protein TGBp1 (226 aa).

One can recognise a (+)RNA virus helicase ATP-binding domain in the interval 1 to 138; it reads MDILIISLKS…IASCGFDFET (138 aa). A (+)RNA virus helicase C-terminal domain is found at 139–226; that stretch reads NSQEEGHLEI…KGLTYVRAGA (88 aa).

This sequence belongs to the Tymovirales TGBp1 protein family. As to quaternary structure, homodimer and homooligomer. Interacts with capsid protein. Interacts with host AGO1; this interaction targets the host protein for degradation, thereby suppressing the antiviral RNA silencing.

It is found in the host cytoplasm. Functionally, transports viral genome to neighboring plant cells directly through plasmosdesmata, without any budding. The movement protein allows efficient cell to cell propagation, by bypassing the host cell wall barrier. Increases plasmodesma size exclusion limit. Acts as a suppressor of RNA-mediated gene silencing, also known as post-transcriptional gene silencing (PTGS), a mechanism of plant viral defense that limits the accumulation of viral RNAs. The protein is Movement and silencing protein TGBp1 of Brassica campestris (Field mustard).